The chain runs to 736 residues: Polyribonucleotide nucleotidyltransferase (736 aa).

The Mg(2+) site is built by D488 and D494. Residues 555 to 614 (PMVQTLEIQKEKIRDVIGLGGKVIKELCKTFDVEIDISENGEVKVWGNVGENVKKAVQSI) form the KH domain. The S1 motif domain occupies 624-692 (GDIFDGEVVK…HKNRVKLTLR (69 aa)).

It belongs to the polyribonucleotide nucleotidyltransferase family. Mg(2+) is required as a cofactor.

The protein resides in the cytoplasm. The catalysed reaction is RNA(n+1) + phosphate = RNA(n) + a ribonucleoside 5'-diphosphate. Functionally, involved in mRNA degradation. Catalyzes the phosphorolysis of single-stranded polyribonucleotides processively in the 3'- to 5'-direction. This Orientia tsutsugamushi (strain Ikeda) (Rickettsia tsutsugamushi) protein is Polyribonucleotide nucleotidyltransferase.